The following is an 878-amino-acid chain: Vacuolar membrane protease (878 aa).

Over 1–16 the chain is Cytoplasmic; sequence MASLRLPRANPLAFTR. Residues 17–37 traverse the membrane as a helical segment; the sequence is WPVTVITAIVYLALLIPLLVV. Topologically, residues 38 to 390 are vacuolar; that stretch reads HHVVPSAPSS…STFVLFQLHT (353 aa). Asparagine 53 and asparagine 119 each carry an N-linked (GlcNAc...) asparagine glycan. Residues histidine 174 and aspartate 186 each coordinate Zn(2+). Residue glutamate 220 is the Proton acceptor of the active site. Residues glutamate 221, glutamate 246, and histidine 319 each contribute to the Zn(2+) site. A helical membrane pass occupies residues 391-411; the sequence is LFALLVTLLIVGPLTLLFTSI. At 412 to 442 the chain is on the cytoplasmic side; it reads ALTKADKMYLFRSSAKSEDRLDVVPLQGLRG. The helical transmembrane segment at 443-463 threads the bilayer; the sequence is FFRFPFLFGIPTVVTVGLAYL. The Vacuolar segment spans residues 464–473; it reads VTKVNPYIIH. The chain crosses the membrane as a helical span at residues 474–494; the sequence is SSAYAVWSMMVAAWVFLAWFV. The Cytoplasmic portion of the chain corresponds to 495-508; that stretch reads SRVADFARPSAFHR. A helical transmembrane segment spans residues 509 to 529; it reads IYTLTWMYVLSWVSAVIATVY. Over 530-533 the chain is Vacuolar; that stretch reads ANQR. A helical membrane pass occupies residues 534 to 554; it reads GLAGGYFIFFFHAGIFLATWI. Residues 555 to 659 are Cytoplasmic-facing; that stretch reads SYLELFALPS…ALPKWTWGLQ (105 aa). The segment covering 577–590 has biased composition (low complexity); that stretch reads GRASGHGSRRGTTS. A disordered region spans residues 577 to 611; sequence GRASGHGSRRGTTSGEDDGEEAEEEPTESTSLLGS. A compositionally biased stretch (acidic residues) spans 591–603; it reads GEDDGEEAEEEPT. Residues 660 to 680 form a helical membrane-spanning segment; sequence LLLTAPITLIMVGPLALLTIS. Topologically, residues 681 to 693 are vacuolar; sequence AISQTGQDGGHPL. The chain crosses the membrane as a helical span at residues 694–714; sequence FAYVAIAIFTTIMLTPLLPFI. The Cytoplasmic portion of the chain corresponds to 715 to 721; sequence HRYTYHV. Residues 722–742 form a helical membrane-spanning segment; sequence PLFLLAVFLGTLIYNLVAFPF. Topologically, residues 743–878 are vacuolar; sequence SDSNRLKLYY…RRAFEIGNDD (136 aa).

This sequence belongs to the peptidase M28 family. Zn(2+) is required as a cofactor.

Its subcellular location is the vacuole membrane. Functionally, may be involved in vacuolar sorting and osmoregulation. This chain is Vacuolar membrane protease, found in Aspergillus flavus (strain ATCC 200026 / FGSC A1120 / IAM 13836 / NRRL 3357 / JCM 12722 / SRRC 167).